A 37-amino-acid polypeptide reads, in one-letter code: Large ribosomal subunit protein bL36 (37 aa).

Belongs to the bacterial ribosomal protein bL36 family.

The sequence is that of Large ribosomal subunit protein bL36 from Staphylococcus carnosus (strain TM300).